A 496-amino-acid polypeptide reads, in one-letter code: Aspartyl/glutamyl-tRNA(Asn/Gln) amidotransferase subunit B (496 aa).

The interval 475–496 is disordered; that stretch reads TGGSADPSKVNTLLREQLEDKK.

The protein belongs to the GatB/GatE family. GatB subfamily. As to quaternary structure, heterotrimer of A, B and C subunits.

It carries out the reaction L-glutamyl-tRNA(Gln) + L-glutamine + ATP + H2O = L-glutaminyl-tRNA(Gln) + L-glutamate + ADP + phosphate + H(+). The enzyme catalyses L-aspartyl-tRNA(Asn) + L-glutamine + ATP + H2O = L-asparaginyl-tRNA(Asn) + L-glutamate + ADP + phosphate + 2 H(+). Functionally, allows the formation of correctly charged Asn-tRNA(Asn) or Gln-tRNA(Gln) through the transamidation of misacylated Asp-tRNA(Asn) or Glu-tRNA(Gln) in organisms which lack either or both of asparaginyl-tRNA or glutaminyl-tRNA synthetases. The reaction takes place in the presence of glutamine and ATP through an activated phospho-Asp-tRNA(Asn) or phospho-Glu-tRNA(Gln). The sequence is that of Aspartyl/glutamyl-tRNA(Asn/Gln) amidotransferase subunit B from Haloquadratum walsbyi (strain DSM 16790 / HBSQ001).